The sequence spans 532 residues: Glutamate--cysteine ligase (532 aa).

This sequence belongs to the glutamate--cysteine ligase type 1 family. Type 1 subfamily.

The enzyme catalyses L-cysteine + L-glutamate + ATP = gamma-L-glutamyl-L-cysteine + ADP + phosphate + H(+). It functions in the pathway sulfur metabolism; glutathione biosynthesis; glutathione from L-cysteine and L-glutamate: step 1/2. This is Glutamate--cysteine ligase from Pseudomonas fluorescens (strain ATCC BAA-477 / NRRL B-23932 / Pf-5).